Consider the following 212-residue polypeptide: Prohead core protein protease (212 aa).

H85 is a catalytic residue. The tract at residues 117-136 is homomultimerization; that stretch reads IEGDHGPGDKLAANIRAGWI. The active site involves S140. Residues 207-212 constitute a propeptide that is removed on maturation; that stretch reads AMKKAL.

This sequence belongs to the peptidase U9 family. Homopentamer. The self-cleavage of the N-terminus allows the activation of the protease. Probably also self-cleaved at the C-terminus in order to detach the protease from the scaffold protein and allow it to diffuse within the prohead to cleave the prohead proteins. After cleavage of the inner core of the prohead, the gp21 protease also destroys itself into small cleavage products.

In terms of biological role, serine protease ot the inner core, which is activated by autocatalytic cleavage after completion of prohead assembly and processes many prohead proteins. These cleaved peptides from the inner core and the auto-cleaved protease escape from the capsid, thus liberating space for the phage DNA genome. Cleaves the prohead proteins after the sequence motif L/I-X-E. This chain is Prohead core protein protease (21), found in Escherichia coli (Bacteriophage T4).